A 739-amino-acid chain; its full sequence is Protein NPGR2 (739 aa).

The segment at 32–71 (EQMRHREEEDKKSEVGVGRDYNGSSALSTAESENAKKLDN) is disordered. Residues 33-45 (QMRHREEEDKKSE) are compositionally biased toward basic and acidic residues. Positions 53-63 (NGSSALSTAES) are enriched in polar residues. TPR repeat units follow at residues 90 to 127 (EEAR…KMKT), 162 to 195 (FEAI…VETS), 215 to 248 (TKAV…HWKL), 465 to 498 (PRVV…GAES), 500 to 533 (LEVW…TGKW), 536 to 569 (GKLL…LQVQ), 592 to 625 (LGTW…APYS), 626 to 659 (SVRY…DPMH), and 697 to 733 (HSAW…EETM).

Interacts with calmodulin in a calcium-dependent manner. In terms of tissue distribution, expressed in pollen, flowers and fruits.

The sequence is that of Protein NPGR2 from Arabidopsis thaliana (Mouse-ear cress).